Consider the following 393-residue polypeptide: tRNA (guanine-N(7)-)-methyltransferase (393 aa).

S-adenosyl-L-methionine contacts are provided by glutamate 124, glutamate 149, and aspartate 176. Aspartate 232 contributes to the substrate binding site.

It belongs to the class I-like SAM-binding methyltransferase superfamily. TrmB family.

The enzyme catalyses guanosine(46) in tRNA + S-adenosyl-L-methionine = N(7)-methylguanosine(46) in tRNA + S-adenosyl-L-homocysteine. The protein operates within tRNA modification; N(7)-methylguanine-tRNA biosynthesis. Functionally, catalyzes the formation of N(7)-methylguanine at position 46 (m7G46) in tRNA. The polypeptide is tRNA (guanine-N(7)-)-methyltransferase (Helicobacter pylori (strain ATCC 700392 / 26695) (Campylobacter pylori)).